A 71-amino-acid polypeptide reads, in one-letter code: Biotinylated protein TB7.3 homolog (71 aa).

Positions alanine 2–aspartate 71 constitute a Biotinyl-binding domain. An N6-biotinyllysine modification is found at lysine 37.

This Mycolicibacterium smegmatis (strain ATCC 700084 / mc(2)155) (Mycobacterium smegmatis) protein is Biotinylated protein TB7.3 homolog.